A 188-amino-acid polypeptide reads, in one-letter code: MANSGCKDVTGPDEESFLYFAYGSNLLTERIHLRNPSAAFFCVARLQDFKLDFGNSQGKTSQTWHGGIATIFQSPGDEVWGVVWKMNKSNLNSLDEQEGVKSGMYVVIEVKVATQEGKEITCRSYLMTNYESAPPSPQYKKIICMGAKENGLPLEYQEKLKAIEPNDYTGKVSEEIEDIIKKGETQTL.

A substrate-binding site is contributed by Y19–S24. The active-site Proton acceptor is E98. Y139 lines the substrate pocket. S173 carries the phosphoserine modification.

The protein belongs to the gamma-glutamylcyclotransferase family. Homodimer.

It carries out the reaction an alpha-(gamma-L-glutamyl)-L-amino acid = 5-oxo-L-proline + an L-alpha-amino acid. Its function is as follows. Catalyzes the formation of 5-oxoproline from gamma-glutamyl dipeptides and may play a significant role in glutathione homeostasis. Induces release of cytochrome c from mitochondria with resultant induction of apoptosis. In Homo sapiens (Human), this protein is Gamma-glutamylcyclotransferase.